Consider the following 316-residue polypeptide: L-lactate dehydrogenase (316 aa).

Residues 13 to 15 (GMI), 34 to 36 (FDI), Y67, and 79 to 83 (TAGFT) each bind NAD(+). R95 is a substrate binding site. Residues 125-127 (VTN), L150, and L154 each bind NAD(+). Residues R158 and H182 each coordinate substrate. H182 contacts NAD(+). Catalysis depends on H182, which acts as the Proton acceptor.

Belongs to the LDH/MDH superfamily. LDH family. In terms of assembly, homotetramer.

The catalysed reaction is (S)-lactate + NAD(+) = pyruvate + NADH + H(+). It functions in the pathway fermentation; pyruvate fermentation to lactate; (S)-lactate from pyruvate: step 1/1. This Plasmodium berghei protein is L-lactate dehydrogenase.